The chain runs to 523 residues: Cyclin-dependent kinase 17 (523 aa).

A Phosphoserine modification is found at Ser9. The segment at 30–55 is disordered; it reads TIEESSSKDNEPIVKNGRPPTSHSVH. Phosphoserine is present on residues Ser80, Ser92, and Ser105. The disordered stretch occupies residues 103 to 123; sequence MGSDGESDQASGTSSDEVQSP. Residues 110-123 show a composition bias toward polar residues; it reads DQASGTSSDEVQSP. Ser137, Ser146, Ser165, and Ser180 each carry phosphoserine. Residues 192-473 enclose the Protein kinase domain; sequence YIKLEKLGEG…AEEAMKHVYF (282 aa). Residues 198 to 206 and Lys221 each bind ATP; that span reads LGEGTYATV. Catalysis depends on Asp313, which acts as the Proton acceptor. Residues 501-523 form a disordered region; it reads PGFRNSSYPETGHGKNRRQSMLF. Residues 514–523 show a composition bias toward basic residues; sequence GKNRRQSMLF.

It belongs to the protein kinase superfamily. CMGC Ser/Thr protein kinase family. CDC2/CDKX subfamily. As to quaternary structure, found in a complex containing CABLES1, CDK16 and TDRD7. Interacts with TDRD7.

The enzyme catalyses L-seryl-[protein] + ATP = O-phospho-L-seryl-[protein] + ADP + H(+). It carries out the reaction L-threonyl-[protein] + ATP = O-phospho-L-threonyl-[protein] + ADP + H(+). In terms of biological role, may play a role in terminally differentiated neurons. Has a Ser/Thr-phosphorylating activity for histone H1. This Mus musculus (Mouse) protein is Cyclin-dependent kinase 17 (Cdk17).